The following is a 382-amino-acid chain: tRNA-specific 2-thiouridylase MnmA (382 aa).

ATP contacts are provided by residues 18–25 and Leu-44; that span reads AMSGGVDS. The Nucleophile role is filled by Cys-112. The cysteines at positions 112 and 209 are disulfide-linked. Residue Gly-136 coordinates ATP. An interaction with tRNA region spans residues 159 to 161; it reads RDQ. The active-site Cysteine persulfide intermediate is Cys-209.

Belongs to the MnmA/TRMU family.

Its subcellular location is the cytoplasm. It carries out the reaction S-sulfanyl-L-cysteinyl-[protein] + uridine(34) in tRNA + AH2 + ATP = 2-thiouridine(34) in tRNA + L-cysteinyl-[protein] + A + AMP + diphosphate + H(+). In terms of biological role, catalyzes the 2-thiolation of uridine at the wobble position (U34) of tRNA, leading to the formation of s(2)U34. The protein is tRNA-specific 2-thiouridylase MnmA of Methylobacterium nodulans (strain LMG 21967 / CNCM I-2342 / ORS 2060).